The primary structure comprises 235 residues: Small ribosomal subunit protein uS3 (235 aa).

The 69-residue stretch at 39–107 (IRTYIENELK…ETHLNIVEVR (69 aa)) folds into the KH type-2 domain. The interval 215 to 235 (SERRAVEGAGDGGGQRRRENA) is disordered.

Belongs to the universal ribosomal protein uS3 family. In terms of assembly, part of the 30S ribosomal subunit. Forms a tight complex with proteins S10 and S14.

Functionally, binds the lower part of the 30S subunit head. Binds mRNA in the 70S ribosome, positioning it for translation. In Chelativorans sp. (strain BNC1), this protein is Small ribosomal subunit protein uS3.